The primary structure comprises 757 residues: Neutral ceramidase 2 (757 aa).

Residues M1–A25 form the signal peptide. An N-linked (GlcNAc...) asparagine glycan is attached at N311. S330 acts as the Nucleophile in catalysis. 2 N-linked (GlcNAc...) asparagine glycosylation sites follow: N348 and N657.

The protein belongs to the neutral ceramidase family.

It localises to the secreted. The protein resides in the endoplasmic reticulum. It is found in the golgi apparatus. It catalyses the reaction an N-acylsphing-4-enine + H2O = sphing-4-enine + a fatty acid. Hydrolyzes the sphingolipid ceramide into sphingosine and free fatty acid. This Arabidopsis thaliana (Mouse-ear cress) protein is Neutral ceramidase 2.